The primary structure comprises 330 residues: MGVVSLPGIGPLPLYGFQRPGMLLFGLVPLALLALYLVVQARRRRRLHRYTDAPVAQSPWRHLPIAVSLLSLVLLTIALATPTHDMRIPRNRAVIMLVIDMSQSMRATDVEPNRLKAAEQAASQFASQLTPGINLGLVGFAGTPYLLVPPTPQHQATIDALKKLDFADSTATGEAIFTALHAISATAVAGGDTPPPARIVLLSDGGENKPSNPSDPHDGVYTAARLAKDEGVPISTITFGTKGGEIEMDGQKVAVPVSTDQMKMVAKLSGGQSYTATNLGELQKSYNAIENEIGYRTVPGPGSAGWLRLGVLTALIATALALLINRRLPT.

The next 2 helical transmembrane spans lie at 21-41 (GMLL…VVQA) and 63-83 (LPIA…ATPT). One can recognise a VWFA domain in the interval 94–289 (VIMLVIDMSQ…GELQKSYNAI (196 aa)). The helical transmembrane segment at 304–324 (AGWLRLGVLTALIATALALLI) threads the bilayer.

Belongs to the UPF0353 family.

It localises to the cell membrane. This is UPF0353 protein MAP_3434 from Mycolicibacterium paratuberculosis (strain ATCC BAA-968 / K-10) (Mycobacterium paratuberculosis).